A 527-amino-acid chain; its full sequence is Glutamate--cysteine ligase (527 aa).

This sequence belongs to the glutamate--cysteine ligase type 1 family. Type 1 subfamily.

It carries out the reaction L-cysteine + L-glutamate + ATP = gamma-L-glutamyl-L-cysteine + ADP + phosphate + H(+). Its pathway is sulfur metabolism; glutathione biosynthesis; glutathione from L-cysteine and L-glutamate: step 1/2. The protein is Glutamate--cysteine ligase of Bordetella petrii (strain ATCC BAA-461 / DSM 12804 / CCUG 43448).